The primary structure comprises 126 residues: Large ribosomal subunit protein bL12 (126 aa).

The protein belongs to the bacterial ribosomal protein bL12 family. As to quaternary structure, homodimer. Part of the ribosomal stalk of the 50S ribosomal subunit. Forms a multimeric L10(L12)X complex, where L10 forms an elongated spine to which 2 to 4 L12 dimers bind in a sequential fashion. Binds GTP-bound translation factors.

In terms of biological role, forms part of the ribosomal stalk which helps the ribosome interact with GTP-bound translation factors. Is thus essential for accurate translation. The protein is Large ribosomal subunit protein bL12 of Teredinibacter turnerae (strain ATCC 39867 / T7901).